A 384-amino-acid chain; its full sequence is MKPHFRNTVERMYRDTFSYNFYNRPILSRRNTVWLCYEVKTKGPSRPPLDAKIFRGQVYSELKYHPEMRFFHWFSKWRKLHRDQEYEVTWYISWSPCTKCTRDMATFLAEDPKVTLTIFVARLYYFWDPDYQEALRSLCQKRDGPRATMKIMNYDEFQHCWSKFVYSQRELFEPWNNLPKYYILLHIMLGEILRHSMDPPTFTFNFNNEPWVRGRHETYLCYEVERMHNDTWVLLNQRRGFLCNQAPHKHGFLEGRHAELCFLDVIPFWKLDLDQDYRVTCFTSWSPCFSCAQEMAKFISKNKHVSLCIFTARIYDDQGRCQEGLRTLAEAGAKISIMTYSEFKHCWDTFVDHQGCPFQPWDGLDEHSQDLSGRLRAILQNQEN.

An essential for cytoplasmic localization region spans residues 1–60 (MKPHFRNTVERMYRDTFSYNFYNRPILSRRNTVWLCYEVKTKGPSRPPLDAKIFRGQVYS). One can recognise a CMP/dCMP-type deaminase 1 domain in the interval 29-138 (RRNTVWLCYE…PDYQEALRSL (110 aa)). At T32 the chain carries Phosphothreonine; by PKA. (Microbial infection) Glycyl lysine isopeptide (Lys-Gly) (interchain with G-Cter in ubiquitin) cross-links involve residues K42, K52, and K63. The Zn(2+) site is built by H65, C97, and C100. (Microbial infection) Glycyl lysine isopeptide (Lys-Gly) (interchain with G-Cter in ubiquitin) cross-links involve residues K150 and K163. Residues 209 to 336 (EPWVRGRHET…TLAEAGAKIS (128 aa)) are necessary for homooligomerization. Residues 213–215 (RGR) form an interaction with DNA region. The CMP/dCMP-type deaminase 2 domain occupies 214–328 (GRHETYLCYE…GRCQEGLRTL (115 aa)). A Phosphothreonine; by PKA and CAMK2 modification is found at T218. K249 participates in a covalent cross-link: (Microbial infection) Glycyl lysine isopeptide (Lys-Gly) (interchain with G-Cter in ubiquitin). H257 is a binding site for Zn(2+). The Proton donor role is filled by E259. Residue K270 forms a (Microbial infection) Glycyl lysine isopeptide (Lys-Gly) (interchain with G-Cter in ubiquitin) linkage. Residues C288 and C291 each coordinate Zn(2+). (Microbial infection) Glycyl lysine isopeptide (Lys-Gly) (interchain with G-Cter in ubiquitin) cross-links involve residues K297, K301, and K303. The interval 313 to 320 (RIYDDQGR) is interaction with DNA. K334 participates in a covalent cross-link: (Microbial infection) Glycyl lysine isopeptide (Lys-Gly) (interchain with G-Cter in ubiquitin).

This sequence belongs to the cytidine and deoxycytidylate deaminase family. Homodimer. Homooligomer. Can bind RNA to form ribonucleoprotein complexes of high-molecular-mass (HMM) or low-molecular-mass (LMM). HMM is inactive and heterogeneous in protein composition because of binding nonselectively to cellular RNAs, which in turn are associated with variety of cellular proteins. The LMM form which is enzymatically active has few or no RNAs associated. Its ability to form homooligomer is distinct from its ability to assemble into HMM. Interacts with APOBEC3B, APOBEC3F, MOV10, AGO2, EIF4E, EIF4ENIF1, DCP2 and DDX6 in an RNA-dependent manner. Interacts with AGO1, AGO3 and PKA/PRKACA. In terms of assembly, (Microbial infection) Interacts with HIV-1 Vif; promoting its ubiquitination by a cullin-5-RING E3 ubiquitin-protein ligase complex (ECS complex) hijacked by the HIV-1 Vif. As to quaternary structure, (Microbial infection) Interacts with HIV-1 reverse transcriptase/ribonuclease H. (Microbial infection) Interacts with hepatitis B virus capsid protein. Requires Zn(2+) as cofactor. Post-translationally, (Microbial infection) Following infection by HIV-1, ubiquitinated by a cullin-5-RING E3 ubiquitin-protein ligase complex (ECS complex) hijacked by the HIV-1 Vif protein, leading to its degradation. Deubiquitinated by USP49; leading to stabilization. Phosphorylation at Thr-32 reduces its binding to HIV-1 Vif and subsequent ubiquitination and degradation thus promoting its antiviral activity. Expressed in spleen, testes, ovary and peripheral blood leukocytes and CD4+ lymphocytes. Also expressed in non-permissive peripheral blood mononuclear cells, and several tumor cell lines; no expression detected in permissive lymphoid and non-lymphoid cell lines. Exists only in the LMM form in peripheral blood-derived resting CD4 T-cells and monocytes, both of which are refractory to HIV-1 infection. LMM is converted to a HMM complex when resting CD4 T-cells are activated or when monocytes are induced to differentiate into macrophages. This change correlates with increased susceptibility of these cells to HIV-1 infection.

It localises to the cytoplasm. It is found in the nucleus. The protein localises to the P-body. The catalysed reaction is a 2'-deoxycytidine in single-stranded DNA + H2O + H(+) = a 2'-deoxyuridine in single-stranded DNA + NH4(+). Its activity is regulated as follows. (Microbial infection) Antiviral activity is neutralized by the HIV-1 virion infectivity factor (Vif), that prevents its incorporation into progeny virions by both inhibiting its translation and/or by inducing its ubiquitination and subsequent degradation by the 26S proteasome. Can also be neutralized by simian immunodeficiency virus sooty mangabey monkey virus (SIV-sm) and chimpanzee immunodeficiency virus (SIV-cpz) Vif. DNA deaminase (cytidine deaminase) which acts as an inhibitor of retrovirus replication and retrotransposon mobility via deaminase-dependent and -independent mechanisms. Exhibits potent antiviral activity against Vif-deficient HIV-1. After the penetration of retroviral nucleocapsids into target cells of infection and the initiation of reverse transcription, it can induce the conversion of cytosine to uracil in the minus-sense single-strand viral DNA, leading to G-to-A hypermutations in the subsequent plus-strand viral DNA. The resultant detrimental levels of mutations in the proviral genome, along with a deamination-independent mechanism that works prior to the proviral integration, together exert efficient antiretroviral effects in infected target cells. Selectively targets single-stranded DNA and does not deaminate double-stranded DNA or single- or double-stranded RNA. Exhibits antiviral activity also against simian immunodeficiency viruses (SIVs), hepatitis B virus (HBV), equine infectious anemia virus (EIAV), xenotropic MuLV-related virus (XMRV) and simian foamy virus (SFV). May inhibit the mobility of LTR and non-LTR retrotransposons. The sequence is that of DNA dC-&gt;dU-editing enzyme APOBEC-3G from Homo sapiens (Human).